The sequence spans 444 residues: tRNA modification GTPase MnmE (444 aa).

(6S)-5-formyl-5,6,7,8-tetrahydrofolate-binding residues include R25, E83, and K122. The region spanning 218–370 (GFKVAIVGKP…IVGRLRDYLD (153 aa)) is the TrmE-type G domain. GTP contacts are provided by residues 228-233 (NVGKSS), 247-253 (SDEAGTT), and 272-275 (DTAG). Mg(2+) is bound by residues S232 and T253. K444 contributes to the (6S)-5-formyl-5,6,7,8-tetrahydrofolate binding site.

The protein belongs to the TRAFAC class TrmE-Era-EngA-EngB-Septin-like GTPase superfamily. TrmE GTPase family. In terms of assembly, homodimer. Heterotetramer of two MnmE and two MnmG subunits. K(+) is required as a cofactor.

The protein resides in the cytoplasm. In terms of biological role, exhibits a very high intrinsic GTPase hydrolysis rate. Involved in the addition of a carboxymethylaminomethyl (cmnm) group at the wobble position (U34) of certain tRNAs, forming tRNA-cmnm(5)s(2)U34. The polypeptide is tRNA modification GTPase MnmE (Campylobacter curvus (strain 525.92)).